Here is a 244-residue protein sequence, read N- to C-terminus: uncharacterized protein (244 aa).

Positions 12–80 constitute an HTH gntR-type domain; the sequence is VALWRQIADR…QGRGTMIERK (69 aa). The segment at residues 40-59 is a DNA-binding region (H-T-H motif); sequence ETALAAEFGVNRHTVRSALA.

This is an uncharacterized protein from Rhizobium meliloti (strain 1021) (Ensifer meliloti).